The following is a 561-amino-acid chain: Probable oligo-1,6-glucosidase 2 (561 aa).

Residue Asp199 is the Nucleophile of the active site. Glu255 (proton donor) is an active-site residue.

This sequence belongs to the glycosyl hydrolase 13 family.

Its subcellular location is the cytoplasm. The enzyme catalyses Hydrolysis of (1-&gt;6)-alpha-D-glucosidic linkages in some oligosaccharides produced from starch and glycogen by alpha-amylase, and in isomaltose.. This chain is Probable oligo-1,6-glucosidase 2 (ycdG), found in Bacillus subtilis (strain 168).